The chain runs to 260 residues: Purine nucleoside phosphorylase PD_1754 (260 aa).

The Zn(2+) site is built by His-79, Cys-120, and His-137.

The protein belongs to the purine nucleoside phosphorylase YfiH/LACC1 family. Homodimer. Cu(2+) serves as cofactor. It depends on Zn(2+) as a cofactor.

It catalyses the reaction adenosine + phosphate = alpha-D-ribose 1-phosphate + adenine. The catalysed reaction is S-methyl-5'-thioadenosine + phosphate = 5-(methylsulfanyl)-alpha-D-ribose 1-phosphate + adenine. It carries out the reaction inosine + phosphate = alpha-D-ribose 1-phosphate + hypoxanthine. The enzyme catalyses adenosine + H2O + H(+) = inosine + NH4(+). Functionally, purine nucleoside enzyme that catalyzes the phosphorolysis of adenosine and inosine nucleosides, yielding D-ribose 1-phosphate and the respective free bases, adenine and hypoxanthine. Also catalyzes the phosphorolysis of S-methyl-5'-thioadenosine into adenine and S-methyl-5-thio-alpha-D-ribose 1-phosphate. Also has adenosine deaminase activity. This is Purine nucleoside phosphorylase PD_1754 from Xylella fastidiosa (strain Temecula1 / ATCC 700964).